A 360-amino-acid polypeptide reads, in one-letter code: Variable large protein 18 (360 aa).

An N-terminal signal peptide occupies residues Met1–Gly26. Cys27 is lipidated: N-palmitoyl cysteine. Cys27 carries the S-diacylglycerol cysteine lipid modification.

Belongs to the variable large protein (Vlp) family. Alpha subfamily.

It localises to the cell outer membrane. The Vlp and Vsp proteins are antigenically distinct proteins, only one vlp or vsp gene is transcriptionally active at any one time. Switching between these genes is a mechanism of host immune response evasion. In Borrelia hermsii, this protein is Variable large protein 18.